The primary structure comprises 503 residues: ATP synthase subunit alpha (503 aa).

ATP is bound at residue Gly169–Thr176.

The protein belongs to the ATPase alpha/beta chains family. As to quaternary structure, F-type ATPases have 2 components, CF(1) - the catalytic core - and CF(0) - the membrane proton channel. CF(1) has five subunits: alpha(3), beta(3), gamma(1), delta(1), epsilon(1). CF(0) has three main subunits: a(1), b(2) and c(9-12). The alpha and beta chains form an alternating ring which encloses part of the gamma chain. CF(1) is attached to CF(0) by a central stalk formed by the gamma and epsilon chains, while a peripheral stalk is formed by the delta and b chains.

The protein localises to the cell inner membrane. The catalysed reaction is ATP + H2O + 4 H(+)(in) = ADP + phosphate + 5 H(+)(out). In terms of biological role, produces ATP from ADP in the presence of a proton gradient across the membrane. The alpha chain is a regulatory subunit. This Leptospira borgpetersenii serovar Hardjo-bovis (strain L550) protein is ATP synthase subunit alpha.